Here is a 265-residue protein sequence, read N- to C-terminus: Thiazole synthase (265 aa).

The active-site Schiff-base intermediate with DXP is the K106. Residues G167, 193–194 (AG), and 215–216 (NT) each bind 1-deoxy-D-xylulose 5-phosphate. Residues 245–265 (GRIPRRARAEPSSPQLGLVGS) form a disordered region.

This sequence belongs to the ThiG family. In terms of assembly, homotetramer. Forms heterodimers with either ThiH or ThiS.

Its subcellular location is the cytoplasm. It carries out the reaction [ThiS sulfur-carrier protein]-C-terminal-Gly-aminoethanethioate + 2-iminoacetate + 1-deoxy-D-xylulose 5-phosphate = [ThiS sulfur-carrier protein]-C-terminal Gly-Gly + 2-[(2R,5Z)-2-carboxy-4-methylthiazol-5(2H)-ylidene]ethyl phosphate + 2 H2O + H(+). It participates in cofactor biosynthesis; thiamine diphosphate biosynthesis. Its function is as follows. Catalyzes the rearrangement of 1-deoxy-D-xylulose 5-phosphate (DXP) to produce the thiazole phosphate moiety of thiamine. Sulfur is provided by the thiocarboxylate moiety of the carrier protein ThiS. In vitro, sulfur can be provided by H(2)S. The polypeptide is Thiazole synthase (Methylobacterium sp. (strain 4-46)).